Consider the following 518-residue polypeptide: Maturase K (518 aa).

It belongs to the intron maturase 2 family. MatK subfamily.

It is found in the plastid. The protein localises to the chloroplast. In terms of biological role, usually encoded in the trnK tRNA gene intron. Probably assists in splicing its own and other chloroplast group II introns. The polypeptide is Maturase K (Syzygium cumini (Java plum)).